The sequence spans 609 residues: Alpha-glycerophosphate oxidase (609 aa).

21 to 49 is a binding site for FAD; the sequence is DVLIIGGGITGAGVAVQTAAAGMKTVLLE.

The cofactor is FAD.

It localises to the cytoplasm. It carries out the reaction sn-glycerol 3-phosphate + O2 = dihydroxyacetone phosphate + H2O2. Its pathway is membrane lipid metabolism; glycerophospholipid metabolism. The chain is Alpha-glycerophosphate oxidase (glpO) from Enterococcus casseliflavus (Enterococcus flavescens).